The primary structure comprises 207 residues: LexA repressor (207 aa).

The H-T-H motif DNA-binding region spans 28–48 (VREIGEAVGLASSSTVHGHLA). Residues serine 129 and lysine 167 each act as for autocatalytic cleavage activity in the active site.

The protein belongs to the peptidase S24 family. Homodimer.

It carries out the reaction Hydrolysis of Ala-|-Gly bond in repressor LexA.. Its function is as follows. Represses a number of genes involved in the response to DNA damage (SOS response), including recA and lexA. In the presence of single-stranded DNA, RecA interacts with LexA causing an autocatalytic cleavage which disrupts the DNA-binding part of LexA, leading to derepression of the SOS regulon and eventually DNA repair. This chain is LexA repressor, found in Geobacillus sp. (strain WCH70).